Here is a 178-residue protein sequence, read N- to C-terminus: Endothelin-2 (178 aa).

The first 24 residues, 1 to 24, serve as a signal peptide directing secretion; that stretch reads MVSVPTTWCSVALALLVALHEGKG. The propeptide occupies 25 to 46; sequence QAAATLEQPASSSHAQGTHLRL. 2 disulfide bridges follow: Cys-49–Cys-63 and Cys-51–Cys-59. Positions 70 to 178 are excised as a propeptide; sequence VNTPEQTAPY…RSTHSRWRKR (109 aa). The segment at 96-111 is endothelin-like; sequence CQCSSARDPACATFCL. Positions 159-178 are disordered; that stretch reads KRQQEAMREPRSTHSRWRKR. The segment covering 160–170 has biased composition (basic and acidic residues); that stretch reads RQQEAMREPRS.

This sequence belongs to the endothelin/sarafotoxin family. In terms of tissue distribution, expressed in lung, but not in placental stem villi vessels or cultured placental villi smooth muscle cells.

It localises to the secreted. Its function is as follows. Endothelins are endothelium-derived vasoconstrictor peptides. The protein is Endothelin-2 (EDN2) of Homo sapiens (Human).